Consider the following 406-residue polypeptide: Acetate kinase (406 aa).

Position 7 (N7) interacts with Mg(2+). Position 14 (K14) interacts with ATP. Position 90 (R90) interacts with substrate. D147 serves as the catalytic Proton donor/acceptor. Residues 207–211, 283–285, and 331–335 each bind ATP; these read HLGNG, DMR, and GVGEN. E385 provides a ligand contact to Mg(2+).

Belongs to the acetokinase family. As to quaternary structure, homodimer. Requires Mg(2+) as cofactor. Mn(2+) is required as a cofactor.

The protein localises to the cytoplasm. It carries out the reaction acetate + ATP = acetyl phosphate + ADP. Its pathway is metabolic intermediate biosynthesis; acetyl-CoA biosynthesis; acetyl-CoA from acetate: step 1/2. Catalyzes the formation of acetyl phosphate from acetate and ATP. Can also catalyze the reverse reaction. This is Acetate kinase from Fervidobacterium nodosum (strain ATCC 35602 / DSM 5306 / Rt17-B1).